The following is a 257-amino-acid chain: Homeobox protein goosecoid (257 aa).

Residues 160–219 (KRRHRTIFTDEQLEALENLFQETKYPDVGTREQLARKVHLREEKVEVWFKNRRAKWRRQK) constitute a DNA-binding region (homeobox). The interval 213 to 257 (AKWRRQKRSSSEESENAEKWNKTSSSKASPEKREEEGKSDLDSDS) is disordered. Residues 241–257 (SPEKREEEGKSDLDSDS) show a composition bias toward basic and acidic residues.

It belongs to the paired homeobox family. Bicoid subfamily.

The protein localises to the nucleus. Its function is as follows. Regulates chordin (CHRD). May play a role in spatial programing within discrete embryonic fields or lineage compartments during organogenesis. In concert with NKX3-2, plays a role in defining the structural components of the middle ear; required for the development of the entire tympanic ring. Probably involved in the regulatory networks that define neural crest cell fate specification and determine mesoderm cell lineages in mammals. This is Homeobox protein goosecoid (GSC) from Homo sapiens (Human).